Reading from the N-terminus, the 92-residue chain is Small ribosomal subunit protein uS19 (92 aa).

It belongs to the universal ribosomal protein uS19 family.

Functionally, protein S19 forms a complex with S13 that binds strongly to the 16S ribosomal RNA. The sequence is that of Small ribosomal subunit protein uS19 from Aeromonas hydrophila subsp. hydrophila (strain ATCC 7966 / DSM 30187 / BCRC 13018 / CCUG 14551 / JCM 1027 / KCTC 2358 / NCIMB 9240 / NCTC 8049).